Consider the following 173-residue polypeptide: Crossover junction endodeoxyribonuclease RuvC (173 aa).

Residues Asp-11, Glu-71, and Asp-143 contribute to the active site. The Mg(2+) site is built by Asp-11, Glu-71, and Asp-143.

Belongs to the RuvC family. In terms of assembly, homodimer which binds Holliday junction (HJ) DNA. The HJ becomes 2-fold symmetrical on binding to RuvC with unstacked arms; it has a different conformation from HJ DNA in complex with RuvA. In the full resolvosome a probable DNA-RuvA(4)-RuvB(12)-RuvC(2) complex forms which resolves the HJ. The cofactor is Mg(2+).

It is found in the cytoplasm. The catalysed reaction is Endonucleolytic cleavage at a junction such as a reciprocal single-stranded crossover between two homologous DNA duplexes (Holliday junction).. In terms of biological role, the RuvA-RuvB-RuvC complex processes Holliday junction (HJ) DNA during genetic recombination and DNA repair. Endonuclease that resolves HJ intermediates. Cleaves cruciform DNA by making single-stranded nicks across the HJ at symmetrical positions within the homologous arms, yielding a 5'-phosphate and a 3'-hydroxyl group; requires a central core of homology in the junction. The consensus cleavage sequence is 5'-(A/T)TT(C/G)-3'. Cleavage occurs on the 3'-side of the TT dinucleotide at the point of strand exchange. HJ branch migration catalyzed by RuvA-RuvB allows RuvC to scan DNA until it finds its consensus sequence, where it cleaves and resolves the cruciform DNA. This Brucella suis biovar 1 (strain 1330) protein is Crossover junction endodeoxyribonuclease RuvC.